The primary structure comprises 172 residues: Ribosome maturation factor RimM (172 aa).

Residues 96–168 (DGEFYYHEII…RVDVEILEGL (73 aa)) form the PRC barrel domain.

It belongs to the RimM family. Binds ribosomal protein uS19.

It is found in the cytoplasm. An accessory protein needed during the final step in the assembly of 30S ribosomal subunit, possibly for assembly of the head region. Essential for efficient processing of 16S rRNA. May be needed both before and after RbfA during the maturation of 16S rRNA. It has affinity for free ribosomal 30S subunits but not for 70S ribosomes. In Streptococcus pneumoniae serotype 4 (strain ATCC BAA-334 / TIGR4), this protein is Ribosome maturation factor RimM.